The chain runs to 624 residues: 1-deoxy-D-xylulose-5-phosphate synthase (624 aa).

Thiamine diphosphate is bound by residues H74 and 115–117; that span reads GHS. D146 lines the Mg(2+) pocket. Thiamine diphosphate-binding positions include 147–148, N175, Y286, and E366; that span reads GA. N175 provides a ligand contact to Mg(2+).

It belongs to the transketolase family. DXPS subfamily. Homodimer. Mg(2+) serves as cofactor. The cofactor is thiamine diphosphate.

The catalysed reaction is D-glyceraldehyde 3-phosphate + pyruvate + H(+) = 1-deoxy-D-xylulose 5-phosphate + CO2. Its pathway is metabolic intermediate biosynthesis; 1-deoxy-D-xylulose 5-phosphate biosynthesis; 1-deoxy-D-xylulose 5-phosphate from D-glyceraldehyde 3-phosphate and pyruvate: step 1/1. Functionally, catalyzes the acyloin condensation reaction between C atoms 2 and 3 of pyruvate and glyceraldehyde 3-phosphate to yield 1-deoxy-D-xylulose-5-phosphate (DXP). The sequence is that of 1-deoxy-D-xylulose-5-phosphate synthase from Clostridium kluyveri (strain NBRC 12016).